We begin with the raw amino-acid sequence, 277 residues long: Cell death abnormality protein 2 (277 aa).

In terms of domain architecture, SH2 spans 14-112; sequence FYFPGMSRED…EASLLSAYKK (99 aa). Residues 113-173 form the SH3 1 domain; sequence PIIEVVVGTF…PANYVQVQSG (61 aa). Residues 179–217 form a disordered region; it reads RISKGTSQSSIGSSGNGAERFSSTSTSSENAEAHPTLPT. Low complexity predominate over residues 182-206; sequence KGTSQSSIGSSGNGAERFSSTSTSS. In terms of domain architecture, SH3 2 spans 214-275; it reads TLPTTAKVTF…PFTYIRFNTA (62 aa).

The protein belongs to the CRK family. As to quaternary structure, interacts with ced-5 (via C-terminus which contains a candidate SH3-binding, proline-rich region). Forms a ternary complex with ced-5 and ced-12. Interacts (via SH-2 domain) with src-1 (when activated and phosphorylated at 'Tyr-416').

Functionally, required for cell migration and engulfment of cell corpses but not for programmed cell death/apoptosis. Also has a role in the migration of the 2 gonadal distal tip cells (DTCs). This is Cell death abnormality protein 2 from Caenorhabditis briggsae.